The primary structure comprises 322 residues: Thioredoxin reductase (322 aa).

FAD is bound by residues 12 to 15 (SGPA), 34 to 42 (EGAVTAGGA), N51, and V84. A disulfide bond links C136 and C139. The NADP(+) site is built by H176, R182, and Y259. FAD is bound by residues D279 and 286-289 (RQAI). An NADP(+)-binding site is contributed by R286.

Belongs to the class-II pyridine nucleotide-disulfide oxidoreductase family. As to quaternary structure, homodimer. FAD is required as a cofactor.

It carries out the reaction [thioredoxin]-dithiol + NADP(+) = [thioredoxin]-disulfide + NADPH + H(+). Component of the thioredoxin-thioredoxin reductase system which may be involved in biosynthesis of penicillins and cephalosporins and may be important in determining the thiol-disulfide redox balance. The sequence is that of Thioredoxin reductase from Streptomyces clavuligerus.